The following is a 146-amino-acid chain: Lipoprotein signal peptidase (146 aa).

3 helical membrane-spanning segments follow: residues 6–26 (IFLLVAIGIFIIDQNIKTLFL), 50–70 (MFAFIGPYLKWVQALLIGGIL), and 82–104 (YAFPAGLLIGGALGNLYDRFVHA). Residues Asp108 and Asp125 contribute to the active site. Residues 123 to 143 (FADVAIDLAVAWILIMVYFFP) traverse the membrane as a helical segment.

The protein belongs to the peptidase A8 family.

Its subcellular location is the cell inner membrane. It catalyses the reaction Release of signal peptides from bacterial membrane prolipoproteins. Hydrolyzes -Xaa-Yaa-Zaa-|-(S,diacylglyceryl)Cys-, in which Xaa is hydrophobic (preferably Leu), and Yaa (Ala or Ser) and Zaa (Gly or Ala) have small, neutral side chains.. Its pathway is protein modification; lipoprotein biosynthesis (signal peptide cleavage). This protein specifically catalyzes the removal of signal peptides from prolipoproteins. The protein is Lipoprotein signal peptidase of Sulfurovum sp. (strain NBC37-1).